Reading from the N-terminus, the 359-residue chain is Alanine racemase (359 aa).

Residue Lys-35 is the Proton acceptor; specific for D-alanine of the active site. Lys-35 bears the N6-(pyridoxal phosphate)lysine mark. Residue Arg-130 coordinates substrate. Tyr-255 (proton acceptor; specific for L-alanine) is an active-site residue. Met-303 contributes to the substrate binding site.

This sequence belongs to the alanine racemase family. It depends on pyridoxal 5'-phosphate as a cofactor.

The catalysed reaction is L-alanine = D-alanine. The protein operates within amino-acid biosynthesis; D-alanine biosynthesis; D-alanine from L-alanine: step 1/1. In terms of biological role, catalyzes the interconversion of L-alanine and D-alanine. May also act on other amino acids. The polypeptide is Alanine racemase (alr) (Janthinobacterium sp. (strain Marseille) (Minibacterium massiliensis)).